Reading from the N-terminus, the 229-residue chain is Flagellar brake protein YcgR (229 aa).

One can recognise a PilZ domain in the interval 134-218 (QLSLRVLDVS…GERALQRYID (85 aa)).

This sequence belongs to the YcgR family. In terms of assembly, monomer. Interacts with the flagellar basal bodies.

The protein resides in the bacterial flagellum basal body. Acts as a flagellar brake, regulating swimming and swarming in a bis-(3'-5') cyclic diguanylic acid (c-di-GMP)-dependent manner. Binds 1 c-di-GMP dimer per subunit. Increasing levels of c-di-GMP lead to decreased motility. The sequence is that of Flagellar brake protein YcgR from Methylibium petroleiphilum (strain ATCC BAA-1232 / LMG 22953 / PM1).